The following is a 233-amino-acid chain: Ion-translocating oxidoreductase complex subunit E (233 aa).

The next 5 membrane-spanning stretches (helical) occupy residues 22–42 (LLGL…LGLG), 69–89 (IPIY…LINA), 93–113 (GLYQ…IVVG), 128–148 (ALDG…LGSI), and 182–202 (PMLL…LLAA).

This sequence belongs to the NqrDE/RnfAE family. The complex is composed of six subunits: RnfA, RnfB, RnfC, RnfD, RnfE and RnfG.

The protein localises to the cell inner membrane. In terms of biological role, part of a membrane-bound complex that couples electron transfer with translocation of ions across the membrane. The sequence is that of Ion-translocating oxidoreductase complex subunit E from Erwinia tasmaniensis (strain DSM 17950 / CFBP 7177 / CIP 109463 / NCPPB 4357 / Et1/99).